The following is a 1597-amino-acid chain: Mitogen-activated protein kinase kinase kinase 4 (1597 aa).

Disordered stretches follow at residues 1 to 128 (MRDA…VETV) and 424 to 465 (SPRP…PRVP). The segment covering 59-69 (SDPEDFSDETN) has biased composition (acidic residues). The residue at position 77 (Ser-77) is a Phosphoserine. Over residues 84–94 (QMKRLSAKHQR) the composition is skewed to basic residues. Ser-424 is modified (phosphoserine). Thr-440 is modified (phosphothreonine). Phosphoserine is present on Ser-449. The segment covering 449–458 (SGTEESDEEP) has biased composition (acidic residues). Position 451 is a phosphothreonine (Thr-451). A phosphoserine mark is found at Ser-454 and Ser-492. 3 disordered regions span residues 1137 to 1157 (RPVK…IIPT), 1190 to 1220 (AAGR…SVPE), and 1233 to 1263 (FRSL…TRRS). Positions 1210 to 1219 (APDTRGSSVP) are enriched in polar residues. Ser-1241 and Ser-1263 each carry phosphoserine. A compositionally biased stretch (basic and acidic residues) spans 1241–1250 (SPTEERDEPA). A Protein kinase domain is found at 1332–1590 (WQRGNKIGEG…ASQLLDHAFV (259 aa)). ATP contacts are provided by residues 1338–1346 (IGEGQYGKV) and Lys-1361. Asp-1452 serves as the catalytic Proton acceptor.

It belongs to the protein kinase superfamily. STE Ser/Thr protein kinase family. MAP kinase kinase kinase subfamily. Monomer and homodimer. Homodimerization enhances kinase activity. Interacts with CDC42. Interacts with TRAF4; this promotes homodimerization. Binds both upstream activators and downstream substrates in multimolecular complexes. Interacts with AXIN1 and DIXDC1; interaction with DIXDC1 prevents interaction with AXIN1. Interacts with GADD45 and MAP2K6. Interacts with ZFP36; this interaction enhances the association with SH3KBP1/CIN85. Interacts with SH3KBP1; this interaction enhances the association with ZFP36. Mg(2+) is required as a cofactor. In terms of tissue distribution, widely expressed. High expression was found in skeletal muscle, kidney, testis followed by heart brain and lung. Low expression was found in spleen.

It localises to the cytoplasm. It is found in the perinuclear region. It catalyses the reaction L-seryl-[protein] + ATP = O-phospho-L-seryl-[protein] + ADP + H(+). It carries out the reaction L-threonyl-[protein] + ATP = O-phospho-L-threonyl-[protein] + ADP + H(+). With respect to regulation, N-terminal autoinhibitory domain interacts with the C-terminal kinase domain, inhibiting kinase activity, and preventing interaction with its substrate, MAP2K6. The GADD45 proteins activate the kinase by binding to the N-terminal domain. Activated by phosphorylation on Thr-1494. In terms of biological role, component of a protein kinase signal transduction cascade. Activates the CSBP2, P38 and JNK MAPK pathways, but not the ERK pathway. Specifically phosphorylates and activates MAP2K4 and MAP2K6. This Mus musculus (Mouse) protein is Mitogen-activated protein kinase kinase kinase 4 (Map3k4).